Consider the following 550-residue polypeptide: Chaperonin GroEL (550 aa).

Residues 30-33, lysine 51, 87-91, glycine 415, and aspartate 496 each bind ATP; these read TLGP and DGTTT.

It belongs to the chaperonin (HSP60) family. In terms of assembly, forms a cylinder of 14 subunits composed of two heptameric rings stacked back-to-back. Interacts with the co-chaperonin GroES.

It localises to the cytoplasm. It catalyses the reaction ATP + H2O + a folded polypeptide = ADP + phosphate + an unfolded polypeptide.. In terms of biological role, together with its co-chaperonin GroES, plays an essential role in assisting protein folding. The GroEL-GroES system forms a nano-cage that allows encapsulation of the non-native substrate proteins and provides a physical environment optimized to promote and accelerate protein folding. The protein is Chaperonin GroEL of Rickettsia bellii (strain OSU 85-389).